Here is a 368-residue protein sequence, read N- to C-terminus: Spermidine/putrescine import ATP-binding protein PotA (368 aa).

The ABC transporter domain occupies 8–238 (IELRGVTKNF…PANLYVARFV (231 aa)). 40–47 (GPSGCGKT) contacts ATP.

Belongs to the ABC transporter superfamily. Spermidine/putrescine importer (TC 3.A.1.11.1) family. In terms of assembly, the complex is composed of two ATP-binding proteins (PotA), two transmembrane proteins (PotB and PotC) and a solute-binding protein (PotD).

It localises to the cell inner membrane. The catalysed reaction is ATP + H2O + polyamine-[polyamine-binding protein]Side 1 = ADP + phosphate + polyamineSide 2 + [polyamine-binding protein]Side 1.. Functionally, part of the ABC transporter complex PotABCD involved in spermidine/putrescine import. Responsible for energy coupling to the transport system. The polypeptide is Spermidine/putrescine import ATP-binding protein PotA (Nitratidesulfovibrio vulgaris (strain ATCC 29579 / DSM 644 / CCUG 34227 / NCIMB 8303 / VKM B-1760 / Hildenborough) (Desulfovibrio vulgaris)).